Here is a 168-residue protein sequence, read N- to C-terminus: uncharacterized protein (168 aa).

Over residues 1-15 (MKEASDREEAPKMVE) the composition is skewed to basic and acidic residues. Residues 1 to 36 (MKEASDREEAPKMVEKNYSTGFRKAHGEKDQSVTKP) form a disordered region.

The protein resides in the cytoplasm. This is an uncharacterized protein from Saccharomyces cerevisiae (strain ATCC 204508 / S288c) (Baker's yeast).